We begin with the raw amino-acid sequence, 81 residues long: MNIDSHTFLLGMQYLGAGLAAIGCIGGGVGIGTVTGKAVEAIGRQPESASKVMPTMIMGLAFAEVTSLYALFVAIMLLFVK.

2 consecutive transmembrane segments (helical) span residues 14 to 34 (YLGA…IGTV) and 60 to 80 (LAFA…LLFV).

It belongs to the ATPase C chain family. As to quaternary structure, F-type ATPases have 2 components, F(1) - the catalytic core - and F(0) - the membrane proton channel. F(1) has five subunits: alpha(3), beta(3), gamma(1), delta(1), epsilon(1). F(0) has three main subunits: a(1), b(2) and c(10-14). The alpha and beta chains form an alternating ring which encloses part of the gamma chain. F(1) is attached to F(0) by a central stalk formed by the gamma and epsilon chains, while a peripheral stalk is formed by the delta and b chains.

Its subcellular location is the cell membrane. F(1)F(0) ATP synthase produces ATP from ADP in the presence of a proton or sodium gradient. F-type ATPases consist of two structural domains, F(1) containing the extramembraneous catalytic core and F(0) containing the membrane proton channel, linked together by a central stalk and a peripheral stalk. During catalysis, ATP synthesis in the catalytic domain of F(1) is coupled via a rotary mechanism of the central stalk subunits to proton translocation. In terms of biological role, key component of the F(0) channel; it plays a direct role in translocation across the membrane. A homomeric c-ring of between 10-14 subunits forms the central stalk rotor element with the F(1) delta and epsilon subunits. This is ATP synthase subunit c from Clostridium acetobutylicum (strain ATCC 824 / DSM 792 / JCM 1419 / IAM 19013 / LMG 5710 / NBRC 13948 / NRRL B-527 / VKM B-1787 / 2291 / W).